The following is a 257-amino-acid chain: Non-homologous end joining protein Ku (257 aa).

The Ku domain occupies Thr-9–Glu-184.

This sequence belongs to the prokaryotic Ku family. Homodimer. Interacts with LigD.

Functionally, with LigD forms a non-homologous end joining (NHEJ) DNA repair enzyme, which repairs dsDNA breaks with reduced fidelity. Binds linear dsDNA with 5'- and 3'- overhangs but not closed circular dsDNA nor ssDNA. Recruits and stimulates the ligase activity of LigD. This chain is Non-homologous end joining protein Ku, found in Lachnoclostridium phytofermentans (strain ATCC 700394 / DSM 18823 / ISDg) (Clostridium phytofermentans).